The chain runs to 840 residues: Leucine--tRNA ligase (840 aa).

The short motif at 44–55 is the 'HIGH' region element; it reads PYPSANGLHVGH. The 'KMSKS' region signature appears at 617 to 621; that stretch reads KMSKS. Lys620 contributes to the ATP binding site.

The protein belongs to the class-I aminoacyl-tRNA synthetase family.

The protein resides in the cytoplasm. It catalyses the reaction tRNA(Leu) + L-leucine + ATP = L-leucyl-tRNA(Leu) + AMP + diphosphate. This Borreliella burgdorferi (strain ZS7) (Borrelia burgdorferi) protein is Leucine--tRNA ligase.